We begin with the raw amino-acid sequence, 227 residues long: [D-Ala2]-deltorphins (227 aa).

Positions 1–20 (MSFLKKSLLLVLFLGLVSHS) are cleaved as a signal peptide. The propeptide occupies 21–46 (VCKEEKRETEEENENEEENHEVGSEM). Positions 22–227 (CKEEKRETEE…DVVGGEAKKM (206 aa)) are disordered. Residues 30–39 (EEENENEEEN) are compositionally biased toward acidic residues. A50 carries the D-alanine (Ala) modification. Residues 57 to 75 (DTEEKNENEEENQEEGSEM) constitute a propeptide that is removed on maturation. Acidic residues predominate over residues 62–72 (NENEEENQEEG). Residues 73–87 (SEMKRYAFGYPKREP) are compositionally biased toward basic and acidic residues. The residue at position 79 (A79) is a D-alanine (Ala). Residues 86–104 (EPEEENENEEENHEEGSEM) constitute a propeptide that is removed on maturation. The segment covering 88–98 (EEENENEEENH) has biased composition (acidic residues). Residues 99–108 (EEGSEMKRYA) are compositionally biased toward basic and acidic residues. Position 108 is a D-alanine (Ala) (A108). Glycine amide is present on G113. The propeptide occupies 115–140 (EAKKMKREPEEENENEEENHEEGSEM). Over residues 124–134 (EEENENEEENH) the composition is skewed to acidic residues. Residues 135–144 (EEGSEMKRYA) are compositionally biased toward basic and acidic residues. Residue A144 is modified to D-alanine (Ala). G149 is modified (glycine amide). Residues 151-176 (EAKKMKREPEEENENEEENHEEGSEM) constitute a propeptide that is removed on maturation. The span at 160–170 (EEENENEEENH) shows a compositional bias: acidic residues. A compositionally biased stretch (basic and acidic residues) spans 171 to 180 (EEGSEMKRYA). A180 is modified (D-alanine (Ala)). G185 carries the glycine amide modification. Residues 187-212 (EAKKMKREPEEENENEEENHEEGSEM) constitute a propeptide that is removed on maturation. The span at 196–206 (EEENENEEENH) shows a compositional bias: acidic residues. Basic and acidic residues predominate over residues 207 to 216 (EEGSEMKRYA). D-alanine (Ala) is present on A216. G221 is modified (glycine amide). The propeptide occupies 223–227 (EAKKM).

This sequence belongs to the frog skin active peptide (FSAP) family. Dermorphin subfamily. In terms of tissue distribution, expressed by the skin glands.

It is found in the secreted. Its function is as follows. Deltorphin is a heptapeptide with a very potent opiate-like activity. Has high affinity and selectivity for delta-type opioid receptors. The two dermorphin-like peptides have a similar affinity and selectivity for the mu opioid receptor as dermorphin. This Phyllomedusa bicolor (Two-colored leaf frog) protein is [D-Ala2]-deltorphins.